A 667-amino-acid polypeptide reads, in one-letter code: Alpha-1,4-glucan:maltose-1-phosphate maltosyltransferase (667 aa).

Residues Lys-261, Gln-321, and Asp-356 each coordinate alpha-maltose 1-phosphate. Catalysis depends on Asp-392, which acts as the Nucleophile. Alpha-maltose 1-phosphate is bound at residue Asn-393. The Proton donor role is filled by Glu-421. 534-535 lines the alpha-maltose 1-phosphate pocket; sequence KY.

This sequence belongs to the glycosyl hydrolase 13 family. GlgE subfamily. In terms of assembly, homodimer.

The enzyme catalyses alpha-maltose 1-phosphate + [(1-&gt;4)-alpha-D-glucosyl](n) = [(1-&gt;4)-alpha-D-glucosyl](n+2) + phosphate. Its function is as follows. Maltosyltransferase that uses maltose 1-phosphate (M1P) as the sugar donor to elongate linear or branched alpha-(1-&gt;4)-glucans. Is involved in a branched alpha-glucan biosynthetic pathway from trehalose, together with TreS, Mak and GlgB. The sequence is that of Alpha-1,4-glucan:maltose-1-phosphate maltosyltransferase from Methylacidiphilum infernorum (isolate V4) (Methylokorus infernorum (strain V4)).